Consider the following 254-residue polypeptide: C-X-C motif chemokine 16 (254 aa).

Residues 1–29 (MGRDLRPGSRVLLLLLLLLLVYLTQPGNG) form the signal peptide. Residues 30–205 (NEGSVTGSCY…AGPTARTSAT (176 aa)) lie on the Extracellular side of the membrane. Residues 32-107 (GSVTGSCYCG…DLKECGHAYS (76 aa)) form a chemokine region. 2 cysteine pairs are disulfide-bonded: Cys38-Cys68 and Cys40-Cys82. The disordered stretch occupies residues 146–165 (QSTQRPTLPVGSLSSDKELT). N-linked (GlcNAc...) asparagine glycosylation occurs at Asn168. A disordered region spans residues 178 to 200 (SLAAGPEAGENQKQPEKNAGPTA). Residues 206-226 (VPVLCLLAIIFILTAALSYVL) traverse the membrane as a helical segment. Residues 227–254 (CKRRRGQSPQSSPDLPVHYIPVAPDSNT) are Cytoplasmic-facing. The disordered stretch occupies residues 231–254 (RGQSPQSSPDLPVHYIPVAPDSNT).

It belongs to the intercrine alpha (chemokine CxC) family. Glycosylated. In terms of tissue distribution, expressed in T-cell areas. Expressed in spleen, lymph nodes, lung, kidney, small intestine and thymus. Weak expression in heart and liver and no expression in brain and bone marrow.

It is found in the cell membrane. Its subcellular location is the secreted. Functionally, acts as a scavenger receptor on macrophages, which specifically binds to OxLDL (oxidized low density lipoprotein), suggesting that it may be involved in pathophysiology such as atherogenesis. Induces a strong chemotactic response. Induces calcium mobilization. Binds to CXCR6/Bonzo. The sequence is that of C-X-C motif chemokine 16 (CXCL16) from Homo sapiens (Human).